Reading from the N-terminus, the 46-residue chain is DNA-directed RNA polymerases I, II, and III subunit rpabc4 (46 aa).

Zn(2+) is bound by residues Cys-7, Cys-10, Cys-24, and Cys-27. The segment at 7–27 adopts a C4-type zinc-finger fold; that stretch reads CGECGAEHEIKPKEPVKCKDC.

This sequence belongs to the archaeal Rpo12/eukaryotic RPC10 RNA polymerase subunit family. As to quaternary structure, component of the RNA polymerase I (Pol I), RNA polymerase II (Pol II) and RNA polymerase III (Pol III) complexes consisting of at least 13, 12 and 17 subunits, respectively.

It localises to the nucleus. DNA-dependent RNA polymerase catalyzes the transcription of DNA into RNA using the four ribonucleoside triphosphates as substrates. Common component of RNA polymerases I, II and III which synthesize ribosomal RNA precursors, mRNA precursors and many functional non-coding RNAs, and a small RNAs, such as 5S rRNA and tRNAs, respectively. This Dictyostelium discoideum (Social amoeba) protein is DNA-directed RNA polymerases I, II, and III subunit rpabc4 (polr2k).